Reading from the N-terminus, the 990-residue chain is MLRLKSLKKPVQAVVRRFATTSAPTLSVGDNIHGFNVLRTKEIPEFDLQATLLEHSTGAQHLHIARDDSNNVFSIGFKTNPPDRTGVPHILEHTTLCGSEKYQVRDPFFKMLNRSLANFMNAMTAQDYTFYPFATTNATDMKNLRDVYLDATLKPLLRELDFSQEGWRLENEDSKDKTSPIILKGVVFNEMKGQMSNAAYAFYIRYLEKIYPSLNNSGGDPLVIPELTYEGLKKFHADHYNPSNAKTFSYGDISVADHLEALNAKFENCEISKTPGNTERLPLEFSSAAENTRIVEEGPIDTLLDTSKQHKMSMSWLMGSPKDIYESFCVKIISSLLIDGHSSPLHQKLIDSGLGSSYSPNTGLDSAPGANIFSVGLQGVTESDLTKVETVILDTIKTTVAEGFDKGRIDGLLHQTELARKDQNAKFGMALMNGVLPGWFNQVDPLEALEWNSVLDRFNKDMEADPEFLQKVMKKYLLDNKYFHFQMNPNPDYEKNVQEKEDEILTDKLAKLTESDKEEIFETGANLEKMQEEPENLDCLPTLHVSDIPRSKPRVALEHTKNPYPIQWRLAPTNGLTYFHSISSLEGLPHEYYPFLPLFTSSLTFLGTKDKTMGQLEDEIKLNTGGLDFSVSCSSSPLSLPSSQLNFAMDGVALDKNVETMFGLFQELLRNTDFTNVEKLKTMIAASTANLSNALAQSGHSFAMLRAASDISPVKKIDDILGGVAQVRFLSELAAKSEQQLVDEVIPKLQEIAKFALTREQRFAVTCGQDMQTKNDELVRKFAESFETNESPFNISSLSIPMTTPTSTLFKLPFQVNYAGIAIPGVPYTHADGAPLQVLANMLTHKHLHREIREKGGAYGGGASYNPTDGFFSYYSYRDPNLERTLQTCQEAGEWSVKKDWSSSDLQEAKLSLFQRIDAPISVKSEGMALYANGLTYEQREKRRRQLLDVAVDDVKRVAKQYLVNPSGYSVAALGPGYETMDKKKWTVLE.

A mitochondrion-targeting transit peptide spans 1–25 (MLRLKSLKKPVQAVVRRFATTSAPT). His89 contacts Zn(2+). The active-site Proton acceptor is the Glu92. His93 contacts Zn(2+). Glu165 is a catalytic residue. Residue Glu190 participates in Zn(2+) binding.

The protein belongs to the peptidase M16 family. PreP subfamily. In terms of assembly, monomer and homodimer; homodimerization is induced by binding of the substrate. Zn(2+) serves as cofactor.

The protein localises to the mitochondrion intermembrane space. The protein resides in the mitochondrion matrix. Its function is as follows. Degrades mitochondrial transit peptides after their cleavage in the intermembrane space or in the matrix, and presequence peptides; clearance of these peptides is required to keep the presequence processing machinery running. Preferentially cleaves the N-terminal side of paired basic amino acid residues. Also degrades other unstructured peptides. May function as an ATP-dependent peptidase as opposed to a metalloendopeptidase. The polypeptide is Presequence protease, mitochondrial (CYM1) (Yarrowia lipolytica (strain CLIB 122 / E 150) (Yeast)).